The sequence spans 843 residues: Protein P (843 aa).

Positions 1–177 (MPLSYQHFRK…FCGSPYSWEQ (177 aa)) are terminal protein domain (TP). The tract at residues 178 to 346 (ELQHGRLVFQ…YCLSHIVNLL (169 aa)) is spacer. The segment at 347–690 (EDWGPCTEHG…YMNLYPVARQ (344 aa)) is polymerase/reverse transcriptase domain (RT). Residues 357–600 (EHHIRIPRTP…YSLNFMGYVI (244 aa)) form the Reverse transcriptase domain. The Mg(2+) site is built by Asp429, Asp551, and Asp552.

Belongs to the hepadnaviridae P protein family.

It catalyses the reaction DNA(n) + a 2'-deoxyribonucleoside 5'-triphosphate = DNA(n+1) + diphosphate. It carries out the reaction Endonucleolytic cleavage to 5'-phosphomonoester.. Its activity is regulated as follows. Activated by host HSP70 and HSP40 in vitro to be able to bind the epsilon loop of the pgRNA. Because deletion of the RNase H region renders the protein partly chaperone-independent, the chaperones may be needed indirectly to relieve occlusion of the RNA-binding site by this domain. Inhibited by several reverse-transcriptase inhibitors: Lamivudine, Adefovir and Entecavir. Its function is as follows. Multifunctional enzyme that converts the viral RNA genome into dsDNA in viral cytoplasmic capsids. This enzyme displays a DNA polymerase activity that can copy either DNA or RNA templates, and a ribonuclease H (RNase H) activity that cleaves the RNA strand of RNA-DNA heteroduplexes in a partially processive 3'- to 5'-endonucleasic mode. Neo-synthesized pregenomic RNA (pgRNA) are encapsidated together with the P protein, and reverse-transcribed inside the nucleocapsid. Initiation of reverse-transcription occurs first by binding the epsilon loop on the pgRNA genome, and is initiated by protein priming, thereby the 5'-end of (-)DNA is covalently linked to P protein. Partial (+)DNA is synthesized from the (-)DNA template and generates the relaxed circular DNA (RC-DNA) genome. After budding and infection, the RC-DNA migrates in the nucleus, and is converted into a plasmid-like covalently closed circular DNA (cccDNA). The activity of P protein does not seem to be necessary for cccDNA generation, and is presumably released from (+)DNA by host nuclear DNA repair machinery. The chain is Protein P from Homo sapiens (Human).